The sequence spans 450 residues: UDP-N-acetylmuramoylalanine--D-glutamate ligase (450 aa).

Residue 119–125 coordinates ATP; it reads GSNGKTT.

It belongs to the MurCDEF family.

Its subcellular location is the cytoplasm. The enzyme catalyses UDP-N-acetyl-alpha-D-muramoyl-L-alanine + D-glutamate + ATP = UDP-N-acetyl-alpha-D-muramoyl-L-alanyl-D-glutamate + ADP + phosphate + H(+). Its pathway is cell wall biogenesis; peptidoglycan biosynthesis. Cell wall formation. Catalyzes the addition of glutamate to the nucleotide precursor UDP-N-acetylmuramoyl-L-alanine (UMA). In Streptococcus pneumoniae serotype 19F (strain G54), this protein is UDP-N-acetylmuramoylalanine--D-glutamate ligase.